We begin with the raw amino-acid sequence, 414 residues long: Tyrosine--tRNA ligase (414 aa).

Tyr-35 is an L-tyrosine binding site. The short motif at 40 to 49 is the 'HIGH' region element; that stretch reads PTADSLHVGH. L-tyrosine is bound by residues Tyr-164 and Gln-168. The 'KMSKS' region signature appears at 226–230; the sequence is KFGKT. Lys-229 contributes to the ATP binding site. The S4 RNA-binding domain maps to 347–414; the sequence is TKVIDALIEV…KKKYFVILIK (68 aa).

This sequence belongs to the class-I aminoacyl-tRNA synthetase family. TyrS type 1 subfamily. In terms of assembly, homodimer.

Its subcellular location is the cytoplasm. It carries out the reaction tRNA(Tyr) + L-tyrosine + ATP = L-tyrosyl-tRNA(Tyr) + AMP + diphosphate + H(+). Catalyzes the attachment of tyrosine to tRNA(Tyr) in a two-step reaction: tyrosine is first activated by ATP to form Tyr-AMP and then transferred to the acceptor end of tRNA(Tyr). In Mycoplasma mycoides subsp. mycoides SC (strain CCUG 32753 / NCTC 10114 / PG1), this protein is Tyrosine--tRNA ligase.